The following is a 333-amino-acid chain: 4-hydroxy-3-methylbut-2-enyl diphosphate reductase (333 aa).

Cys34 serves as a coordination point for [4Fe-4S] cluster. Residues His63 and His96 each contribute to the (2E)-4-hydroxy-3-methylbut-2-enyl diphosphate site. Residues His63 and His96 each coordinate dimethylallyl diphosphate. His63 and His96 together coordinate isopentenyl diphosphate. Position 118 (Cys118) interacts with [4Fe-4S] cluster. (2E)-4-hydroxy-3-methylbut-2-enyl diphosphate is bound at residue His146. His146 contributes to the dimethylallyl diphosphate binding site. Residue His146 participates in isopentenyl diphosphate binding. The Proton donor role is filled by Glu148. Thr186 is a (2E)-4-hydroxy-3-methylbut-2-enyl diphosphate binding site. Position 216 (Cys216) interacts with [4Fe-4S] cluster. Residues Ser244, Ser245, Asn246, and Ser289 each coordinate (2E)-4-hydroxy-3-methylbut-2-enyl diphosphate. The dimethylallyl diphosphate site is built by Ser244, Ser245, Asn246, and Ser289. Ser244, Ser245, Asn246, and Ser289 together coordinate isopentenyl diphosphate.

Belongs to the IspH family. The cofactor is [4Fe-4S] cluster.

The catalysed reaction is isopentenyl diphosphate + 2 oxidized [2Fe-2S]-[ferredoxin] + H2O = (2E)-4-hydroxy-3-methylbut-2-enyl diphosphate + 2 reduced [2Fe-2S]-[ferredoxin] + 2 H(+). It catalyses the reaction dimethylallyl diphosphate + 2 oxidized [2Fe-2S]-[ferredoxin] + H2O = (2E)-4-hydroxy-3-methylbut-2-enyl diphosphate + 2 reduced [2Fe-2S]-[ferredoxin] + 2 H(+). It participates in isoprenoid biosynthesis; dimethylallyl diphosphate biosynthesis; dimethylallyl diphosphate from (2E)-4-hydroxy-3-methylbutenyl diphosphate: step 1/1. It functions in the pathway isoprenoid biosynthesis; isopentenyl diphosphate biosynthesis via DXP pathway; isopentenyl diphosphate from 1-deoxy-D-xylulose 5-phosphate: step 6/6. Catalyzes the conversion of 1-hydroxy-2-methyl-2-(E)-butenyl 4-diphosphate (HMBPP) into a mixture of isopentenyl diphosphate (IPP) and dimethylallyl diphosphate (DMAPP). Acts in the terminal step of the DOXP/MEP pathway for isoprenoid precursor biosynthesis. The chain is 4-hydroxy-3-methylbut-2-enyl diphosphate reductase from Mycobacterium sp. (strain JLS).